A 134-amino-acid polypeptide reads, in one-letter code: Arsenate reductase (134 aa).

Catalysis depends on nucleophile residues Cys-11, Cys-83, and Cys-90. 2 disulfides stabilise this stretch: Cys-11–Cys-83 and Cys-83–Cys-90.

This sequence belongs to the low molecular weight phosphotyrosine protein phosphatase family. Thioredoxin-coupled ArsC subfamily.

It is found in the cytoplasm. The enzyme catalyses arsenate + [thioredoxin]-dithiol + H(+) = arsenite + [thioredoxin]-disulfide + H2O. Catalyzes the reduction of arsenate [As(V)] to arsenite [As(III)]. The protein is Arsenate reductase of Bacillus cereus (strain ATCC 14579 / DSM 31 / CCUG 7414 / JCM 2152 / NBRC 15305 / NCIMB 9373 / NCTC 2599 / NRRL B-3711).